The chain runs to 105 residues: Iron-sulfur cluster assembly protein CyaY (105 aa).

The protein belongs to the frataxin family.

Involved in iron-sulfur (Fe-S) cluster assembly. May act as a regulator of Fe-S biogenesis. This chain is Iron-sulfur cluster assembly protein CyaY, found in Dechloromonas aromatica (strain RCB).